Reading from the N-terminus, the 189-residue chain is Hypoxanthine/guanine phosphoribosyltransferase (189 aa).

The protein belongs to the purine/pyrimidine phosphoribosyltransferase family. Archaeal HPRT subfamily. In terms of assembly, homodimer.

The protein localises to the cytoplasm. It catalyses the reaction IMP + diphosphate = hypoxanthine + 5-phospho-alpha-D-ribose 1-diphosphate. The catalysed reaction is GMP + diphosphate = guanine + 5-phospho-alpha-D-ribose 1-diphosphate. The protein operates within purine metabolism; IMP biosynthesis via salvage pathway; IMP from hypoxanthine: step 1/1. In terms of biological role, catalyzes a salvage reaction resulting in the formation of IMP that is energically less costly than de novo synthesis. In Methanosarcina acetivorans (strain ATCC 35395 / DSM 2834 / JCM 12185 / C2A), this protein is Hypoxanthine/guanine phosphoribosyltransferase (hpt).